We begin with the raw amino-acid sequence, 136 residues long: Glutamyl-tRNA(Gln) amidotransferase subunit C, mitochondrial (136 aa).

The N-terminal 27 residues, 1–27 (MWARAVHLGLRAAARGRRGFTSKADPQ), are a transit peptide targeting the mitochondrion.

The protein belongs to the GatC family. Subunit of the heterotrimeric GatCAB amidotransferase (AdT) complex, composed of A (QRSL1), B (GATB) and C (GATC) subunits.

The protein localises to the mitochondrion. It catalyses the reaction L-glutamyl-tRNA(Gln) + L-glutamine + ATP + H2O = L-glutaminyl-tRNA(Gln) + L-glutamate + ADP + phosphate + H(+). In terms of biological role, allows the formation of correctly charged Gln-tRNA(Gln) through the transamidation of misacylated Glu-tRNA(Gln) in the mitochondria. The reaction takes place in the presence of glutamine and ATP through an activated gamma-phospho-Glu-tRNA(Gln). In Bos taurus (Bovine), this protein is Glutamyl-tRNA(Gln) amidotransferase subunit C, mitochondrial.